The primary structure comprises 489 residues: MSNDNDTLVTADVRNGIDGHALADRIGLDEAEIAWRLSFTGIDDDTMAALAAEQPLFEATADALVTDFYDHLESYERTQDLFANSTKTVEQLKETQAEYLLGLGRGEYDTEYAAQRARIGKIHDVLGLGPDVYLGAYTRYYTGLLDALADDVVADRGEEAAAAVDELVARFLPMLKLLTFDQQIAMDTYIDSYAQRLHDEIDSRQELANAVASDVEAPLSSLEATSQDVAERTDTMRAATDDQVDRMADVSREISSVSASVEEVASTADDVRRTSEDAEALAQQGEAAADDALATMTDIDEATDGVTAGVEQLRERAADVESVTGVIDDIAEQTNMLALNASIEAARAGEAGEGFAVVADEVKALAEESREQSTRVEELVEQMQAETEETVDQLDEVNQRIGEGVERVEEAMETLQEITDAVEDAASGMQEVSTATDEQAVSTEEVAEMVDDVDDRAGEIAAALDDIADATDQQVRTVEEVRETVGKLS.

Positions 218-454 (PLSSLEATSQ…EVAEMVDDVD (237 aa)) constitute a Methyl-accepting transducer domain.

This sequence belongs to the methyl-accepting chemotaxis (MCP) protein family. As to quaternary structure, homotetramer.

Its function is as follows. Heme-containing signal transducer responsible for aerotaxis, the migratory response toward or away from oxygen. This Halobacterium salinarum (strain ATCC 700922 / JCM 11081 / NRC-1) (Halobacterium halobium) protein is Heme-based aerotactic transducer HemAT (hemAT).